A 448-amino-acid chain; its full sequence is Trigger factor (448 aa).

A PPIase FKBP-type domain is found at 172 to 257 (GDRVTVDFVG…MKKIEWPHLP (86 aa)).

This sequence belongs to the FKBP-type PPIase family. Tig subfamily.

The protein resides in the cytoplasm. The catalysed reaction is [protein]-peptidylproline (omega=180) = [protein]-peptidylproline (omega=0). Functionally, involved in protein export. Acts as a chaperone by maintaining the newly synthesized protein in an open conformation. Functions as a peptidyl-prolyl cis-trans isomerase. The sequence is that of Trigger factor from Paraburkholderia xenovorans (strain LB400).